Reading from the N-terminus, the 345-residue chain is 3-isopropylmalate dehydrogenase (345 aa).

Position 74-87 (74-87 (GPKWDGLPRKIRPE)) interacts with NAD(+). 4 residues coordinate substrate: Arg94, Arg104, Arg132, and Asp217. 3 residues coordinate Mg(2+): Asp217, Asp241, and Asp245. 274 to 286 (GSAPDIAGKGIAN) serves as a coordination point for NAD(+).

It belongs to the isocitrate and isopropylmalate dehydrogenases family. LeuB type 1 subfamily. In terms of assembly, homodimer. It depends on Mg(2+) as a cofactor. Mn(2+) is required as a cofactor.

Its subcellular location is the cytoplasm. The catalysed reaction is (2R,3S)-3-isopropylmalate + NAD(+) = 4-methyl-2-oxopentanoate + CO2 + NADH. It participates in amino-acid biosynthesis; L-leucine biosynthesis; L-leucine from 3-methyl-2-oxobutanoate: step 3/4. Catalyzes the oxidation of 3-carboxy-2-hydroxy-4-methylpentanoate (3-isopropylmalate) to 3-carboxy-4-methyl-2-oxopentanoate. The product decarboxylates to 4-methyl-2 oxopentanoate. The protein is 3-isopropylmalate dehydrogenase (leuB) of Thermus thermophilus (strain ATCC 27634 / DSM 579 / HB8).